The chain runs to 345 residues: Anthranilate phosphoribosyltransferase (345 aa).

Residues Gly-80, 83 to 84 (GD), Thr-88, 90 to 93 (NIST), 108 to 116 (KHGNRSVSS), and Ser-120 contribute to the 5-phospho-alpha-D-ribose 1-diphosphate site. Gly-80 is a binding site for anthranilate. A Mg(2+)-binding site is contributed by Ser-92. Anthranilate is bound at residue Asn-111. Residue Arg-166 participates in anthranilate binding. Mg(2+) is bound by residues Asp-225 and Glu-226.

This sequence belongs to the anthranilate phosphoribosyltransferase family. As to quaternary structure, homodimer. The cofactor is Mg(2+).

It catalyses the reaction N-(5-phospho-beta-D-ribosyl)anthranilate + diphosphate = 5-phospho-alpha-D-ribose 1-diphosphate + anthranilate. It functions in the pathway amino-acid biosynthesis; L-tryptophan biosynthesis; L-tryptophan from chorismate: step 2/5. Catalyzes the transfer of the phosphoribosyl group of 5-phosphorylribose-1-pyrophosphate (PRPP) to anthranilate to yield N-(5'-phosphoribosyl)-anthranilate (PRA). This Pelotomaculum thermopropionicum (strain DSM 13744 / JCM 10971 / SI) protein is Anthranilate phosphoribosyltransferase.